The primary structure comprises 326 residues: Beta-ketoacyl-[acyl-carrier-protein] synthase III (326 aa).

Residues cysteine 112 and histidine 251 contribute to the active site. The ACP-binding stretch occupies residues 252–256 (QANSR). Asparagine 281 is a catalytic residue.

It belongs to the thiolase-like superfamily. FabH family. As to quaternary structure, homodimer.

It is found in the cytoplasm. The catalysed reaction is malonyl-[ACP] + acetyl-CoA + H(+) = 3-oxobutanoyl-[ACP] + CO2 + CoA. It participates in lipid metabolism; fatty acid biosynthesis. Catalyzes the condensation reaction of fatty acid synthesis by the addition to an acyl acceptor of two carbons from malonyl-ACP. Catalyzes the first condensation reaction which initiates fatty acid synthesis and may therefore play a role in governing the total rate of fatty acid production. Possesses both acetoacetyl-ACP synthase and acetyl transacylase activities. Its substrate specificity determines the biosynthesis of branched-chain and/or straight-chain of fatty acids. The sequence is that of Beta-ketoacyl-[acyl-carrier-protein] synthase III from Clostridium botulinum (strain ATCC 19397 / Type A).